Consider the following 415-residue polypeptide: tRNA (cytosine(38)-C(5))-methyltransferase (415 aa).

The region spanning Leu-4–Ala-396 is the SAM-dependent MTase C5-type domain. S-adenosyl-L-methionine contacts are provided by residues Ile-13–Gly-15, Asp-34, Ile-57–Glu-58, and Ser-76. The active site involves Cys-79. Ser-376 serves as a coordination point for S-adenosyl-L-methionine.

This sequence belongs to the class I-like SAM-binding methyltransferase superfamily. C5-methyltransferase family. As to expression, highly expressed in thymus, testis, and at much lower levels in spleen, lung, brain, heart, kidney, liver, skeletal muscle and embryonic stem cells.

It localises to the cytoplasm. The catalysed reaction is cytidine(38) in tRNA + S-adenosyl-L-methionine = 5-methylcytidine(38) in tRNA + S-adenosyl-L-homocysteine + H(+). Specifically methylates cytosine 38 in the anticodon loop of tRNA(Asp). Has higher activity on tRNA(Asp) modified with queuosine at position 34. In Mus musculus (Mouse), this protein is tRNA (cytosine(38)-C(5))-methyltransferase (Trdmt1).